A 104-amino-acid chain; its full sequence is Thioredoxin-3 (104 aa).

The Thioredoxin domain occupies 2 to 104 (SKVIHVTSNE…TLRSTLEANI (103 aa)). Residues C31 and C34 each act as nucleophile in the active site. An intrachain disulfide couples C31 to C34.

Belongs to the thioredoxin family.

Functionally, participates in various redox reactions through the reversible oxidation of its active center dithiol to a disulfide and catalyzes dithiol-disulfide exchange reactions. This chain is Thioredoxin-3 (trxC), found in Dictyostelium discoideum (Social amoeba).